A 342-amino-acid polypeptide reads, in one-letter code: Phosphate acyltransferase (342 aa).

It belongs to the PlsX family. As to quaternary structure, homodimer. Probably interacts with PlsY.

The protein resides in the cytoplasm. The catalysed reaction is a fatty acyl-[ACP] + phosphate = an acyl phosphate + holo-[ACP]. The protein operates within lipid metabolism; phospholipid metabolism. In terms of biological role, catalyzes the reversible formation of acyl-phosphate (acyl-PO(4)) from acyl-[acyl-carrier-protein] (acyl-ACP). This enzyme utilizes acyl-ACP as fatty acyl donor, but not acyl-CoA. The polypeptide is Phosphate acyltransferase (Actinobacillus succinogenes (strain ATCC 55618 / DSM 22257 / CCUG 43843 / 130Z)).